The primary structure comprises 111 residues: Class I hydrophobin SC4 (111 aa).

The first 25 residues, methionine 1–glycine 25, serve as a signal peptide directing secretion. Disulfide bonds link cysteine 30–cysteine 37, cysteine 38–cysteine 72, cysteine 86–cysteine 92, and cysteine 93–cysteine 106. Residue asparagine 39 is glycosylated (N-linked (GlcNAc...) asparagine).

This sequence belongs to the fungal hydrophobin family. Self-assembles to form functional amyloid fibrils called rodlets. Self-assembly into fibrillar rodlets occurs spontaneously at hydrophobic:hydrophilic interfaces and the rodlets further associate laterally to form amphipathic monolayers.

The protein resides in the secreted. The protein localises to the cell wall. Aerial growth, conidiation, and dispersal of filamentous fungi in the environment rely upon a capability of their secreting small amphipathic proteins called hydrophobins (HPBs) with low sequence identity. Class I can self-assemble into an outermost layer of rodlet bundles on aerial cell surfaces, conferring cellular hydrophobicity that supports fungal growth, development and dispersal; whereas Class II form highly ordered films at water-air interfaces through intermolecular interactions but contribute nothing to the rodlet structure. SC4 is a dikaryon-specific class I hydrophobin that contributes to the formation of aerial hyphae and fruiting bodies. Plays a role within fruiting bodies by preventing gas channels filling with water under wet conditions, probably serving uninterrupted gas exchange. SC4 cannot fully substitute for SC3. Involved in the unusual characteristic of mounds to adhere to and completely envelop adjacent fruiting bodies on mosaic colonies. The polypeptide is Class I hydrophobin SC4 (Schizophyllum commune (Split gill fungus)).